The primary structure comprises 277 residues: Release factor glutamine methyltransferase (277 aa).

S-adenosyl-L-methionine contacts are provided by residues 120-124 (GTGSG), D143, W171, and N186. Residue 186–189 (NPPY) participates in substrate binding.

It belongs to the protein N5-glutamine methyltransferase family. PrmC subfamily.

It catalyses the reaction L-glutaminyl-[peptide chain release factor] + S-adenosyl-L-methionine = N(5)-methyl-L-glutaminyl-[peptide chain release factor] + S-adenosyl-L-homocysteine + H(+). Methylates the class 1 translation termination release factors RF1/PrfA and RF2/PrfB on the glutamine residue of the universally conserved GGQ motif. This Coxiella burnetii (strain RSA 493 / Nine Mile phase I) protein is Release factor glutamine methyltransferase.